The primary structure comprises 141 residues: Acetyltransferase YPN_1354 (141 aa).

One can recognise an N-acetyltransferase domain in the interval 1-141 (MEIRIFQQDD…GKRLIVDQEY (141 aa)).

It belongs to the acetyltransferase family. YpeA subfamily.

The sequence is that of Acetyltransferase YPN_1354 from Yersinia pestis bv. Antiqua (strain Nepal516).